We begin with the raw amino-acid sequence, 601 residues long: Coronin-like protein crn1 (601 aa).

WD repeat units lie at residues 79–119 (GHTA…TVME), 132–172 (GHSR…AHVS), 174–213 (KMDV…PVSV), 220–260 (AKNP…EPIG), and 266–306 (DTGS…FHYL). Disordered regions lie at residues 361–386 (SDIY…KDAQ) and 407–540 (SATV…VEEK). Basic and acidic residues-rich tracts occupy residues 419 to 429 (KHNEEKVETPK), 437 to 453 (KPKE…EPEV), and 462 to 495 (KVEE…EKSF). A phosphoserine mark is found at S500 and S501. Positions 507–526 (EDVKKEPSEEKKLEVSDEAP) are enriched in basic and acidic residues. S553 is subject to Phosphoserine. The stretch at 556–600 (NLADLNKRFEGFEKRYEEELAIRDWKIAQLEDKLAKLTEAIKEKC) forms a coiled coil.

It belongs to the WD repeat coronin family. As to quaternary structure, binds to F-actin.

This is Coronin-like protein crn1 (crn1) from Schizosaccharomyces pombe (strain 972 / ATCC 24843) (Fission yeast).